The chain runs to 587 residues: Sedolisin (587 aa).

The first 32 residues, 1–32 (MKSSAAKQTVLCLNRYAVVALPLAIASFAAFG), serve as a signal peptide directing secretion. Residues 33–215 (ASPASTLWAP…VGERSAAKTL (183 aa)) constitute a propeptide, removed in mature form. Residues 219 to 583 (TAKGHNPTEF…AKLSAYIRSN (365 aa)) form the Peptidase S53 domain. The tract at residues 276-295 (TIQTGSSNGDYSDDQQGQGE) is disordered. Catalysis depends on charge relay system residues Glu295 and Asp299. Cysteines 352 and 391 form a disulfide. Catalysis depends on Ser502, which acts as the Charge relay system. Ca(2+)-binding residues include Asp543, Val544, Gly559, Gly561, and Asp563. A propeptide spans 586-587 (GH) (removed in mature form).

It depends on Ca(2+) as a cofactor. Autocatalytically processed.

It localises to the periplasm. The catalysed reaction is Hydrolysis of the B chain of insulin at 13-Glu-|-Ala-14, 15-Leu-|-Tyr-16 and 25-Phe-|-Tyr-26 and angiotensin I at 4-Tyr-|-Ile-5. A good synthetic substrate is Lys-Pro-Ile-Glu-Phe-|-Phe(NO2)-Arg-Leu.. With respect to regulation, inhibited by 1,2-epoxy-3-(p-nitrophenoxy)propane (EPNP), but not by carboxyl proteinase inhibitors, such as pepstatin, pepstatin Ac (S-PI) and diazoacetyl-DL-norleucine methyl ester (DAN). Inhibited by tyrostatin, pseudo-tyrostatin, AcIPF, AcIAF, chymostatin and pseudo-iodotyrostatin. In terms of biological role, pepstatin-insensitive serine-carboxyl proteinase. In vitro can hydrolyze various synthetic peptides. Also shows activity on acid-denatured hemoglobin and on casein. In Pseudomonas sp. (strain 101) (Achromobacter parvulus T1), this protein is Sedolisin (pcp).